We begin with the raw amino-acid sequence, 163 residues long: Phosphopantetheine adenylyltransferase (163 aa).

Residue Ser-10 coordinates substrate. Residues 10 to 11 and His-18 each bind ATP; that span reads SF. Lys-42, Leu-74, and Arg-88 together coordinate substrate. ATP-binding positions include 89-91, Glu-99, and 124-130; these read GLR and YSFLSSS.

This sequence belongs to the bacterial CoaD family. Homohexamer. It depends on Mg(2+) as a cofactor.

It localises to the cytoplasm. The catalysed reaction is (R)-4'-phosphopantetheine + ATP + H(+) = 3'-dephospho-CoA + diphosphate. It functions in the pathway cofactor biosynthesis; coenzyme A biosynthesis; CoA from (R)-pantothenate: step 4/5. Functionally, reversibly transfers an adenylyl group from ATP to 4'-phosphopantetheine, yielding dephospho-CoA (dPCoA) and pyrophosphate. This Bacillus anthracis (strain A0248) protein is Phosphopantetheine adenylyltransferase.